We begin with the raw amino-acid sequence, 100 residues long: Large ribosomal subunit protein bL21 (100 aa).

The protein belongs to the bacterial ribosomal protein bL21 family. In terms of assembly, part of the 50S ribosomal subunit. Contacts protein L20.

This protein binds to 23S rRNA in the presence of protein L20. The chain is Large ribosomal subunit protein bL21 from Mycoplasma genitalium (strain ATCC 33530 / DSM 19775 / NCTC 10195 / G37) (Mycoplasmoides genitalium).